The primary structure comprises 180 residues: ATP synthase subunit b (180 aa).

A helical membrane pass occupies residues 26–46; it reads IPLMLATLAALVISIFFLTYF.

The protein belongs to the ATPase B chain family. In terms of assembly, F-type ATPases have 2 components, F(1) - the catalytic core - and F(0) - the membrane proton channel. F(1) has five subunits: alpha(3), beta(3), gamma(1), delta(1), epsilon(1). F(0) has three main subunits: a(1), b(2) and c(10-14). The alpha and beta chains form an alternating ring which encloses part of the gamma chain. F(1) is attached to F(0) by a central stalk formed by the gamma and epsilon chains, while a peripheral stalk is formed by the delta and b chains.

The protein localises to the cell membrane. Its function is as follows. F(1)F(0) ATP synthase produces ATP from ADP in the presence of a proton or sodium gradient. F-type ATPases consist of two structural domains, F(1) containing the extramembraneous catalytic core and F(0) containing the membrane proton channel, linked together by a central stalk and a peripheral stalk. During catalysis, ATP synthesis in the catalytic domain of F(1) is coupled via a rotary mechanism of the central stalk subunits to proton translocation. Functionally, component of the F(0) channel, it forms part of the peripheral stalk, linking F(1) to F(0). In Mycoplasmopsis pulmonis (strain UAB CTIP) (Mycoplasma pulmonis), this protein is ATP synthase subunit b.